The following is a 118-amino-acid chain: Large ribosomal subunit protein bL20 (118 aa).

Belongs to the bacterial ribosomal protein bL20 family.

In terms of biological role, binds directly to 23S ribosomal RNA and is necessary for the in vitro assembly process of the 50S ribosomal subunit. It is not involved in the protein synthesizing functions of that subunit. This is Large ribosomal subunit protein bL20 from Azotobacter vinelandii (strain DJ / ATCC BAA-1303).